A 286-amino-acid chain; its full sequence is Forkhead box protein E3 (286 aa).

A disordered region spans residues 1–62 (MDAHVAFSGF…GRRRRRPLQR (62 aa)). The fork-head DNA-binding region spans 64-158 (KPPYSYIALI…DNGSFLRRRK (95 aa)).

It localises to the nucleus. In terms of biological role, transcription factor that controls lens epithelial cell growth through regulation of proliferation, apoptosis and cell cycle. During lens development, controls the ratio of the lens fiber cells to the cells of the anterior lens epithelium by regulating the rate of proliferation and differentiation. Controls lens vesicle closure and subsequent separation of the lens vesicle from ectoderm. Controls the expression of DNAJB1 in a pathway that is crucial for the development of the anterior segment of the eye. The chain is Forkhead box protein E3 (Foxe3) from Rattus norvegicus (Rat).